The sequence spans 160 residues: 3-hydroxyacyl-[acyl-carrier-protein] dehydratase FabZ (160 aa).

Histidine 58 is an active-site residue.

The protein belongs to the thioester dehydratase family. FabZ subfamily.

Its subcellular location is the cytoplasm. The catalysed reaction is a (3R)-hydroxyacyl-[ACP] = a (2E)-enoyl-[ACP] + H2O. In terms of biological role, involved in unsaturated fatty acids biosynthesis. Catalyzes the dehydration of short chain beta-hydroxyacyl-ACPs and long chain saturated and unsaturated beta-hydroxyacyl-ACPs. This Ruegeria sp. (strain TM1040) (Silicibacter sp.) protein is 3-hydroxyacyl-[acyl-carrier-protein] dehydratase FabZ.